The primary structure comprises 103 residues: Carboxysome shell protein CsoS1 (103 aa).

One can recognise a BMC domain in the interval 9-94; it reads ALGMIETRGL…PHREVEPALG (86 aa).

Belongs to the bacterial microcompartments protein family. CsoS1 subfamily. In terms of assembly, homohexamer with a small central pore. Forms a CsoS2-CsoS1-RuBisCO complex.

The protein resides in the carboxysome. In terms of biological role, one of the shell proteins of the carboxysome, a polyhedral inclusion where RuBisCO (ribulose bisphosphate carboxylase, ccbL-ccbS) is sequestered. Assembles into hexamers which make sheets that form the facets of the polyhedral carboxysome. This Prochlorococcus marinus (strain MIT 9313) protein is Carboxysome shell protein CsoS1.